The primary structure comprises 372 residues: Transaldolase 2 (372 aa).

Lys-140 (schiff-base intermediate with substrate) is an active-site residue.

This sequence belongs to the transaldolase family. Type 2 subfamily.

It is found in the cytoplasm. It catalyses the reaction D-sedoheptulose 7-phosphate + D-glyceraldehyde 3-phosphate = D-erythrose 4-phosphate + beta-D-fructose 6-phosphate. Its pathway is carbohydrate degradation; pentose phosphate pathway; D-glyceraldehyde 3-phosphate and beta-D-fructose 6-phosphate from D-ribose 5-phosphate and D-xylulose 5-phosphate (non-oxidative stage): step 2/3. Transaldolase is important for the balance of metabolites in the pentose-phosphate pathway. In Streptomyces avermitilis (strain ATCC 31267 / DSM 46492 / JCM 5070 / NBRC 14893 / NCIMB 12804 / NRRL 8165 / MA-4680), this protein is Transaldolase 2.